A 293-amino-acid polypeptide reads, in one-letter code: AA9 family lytic polysaccharide monooxygenase E (293 aa).

An N-terminal signal peptide occupies residues 1–19 (MKGLLSVAALSLAVSEVSA). 2 residues coordinate Cu(2+): His-20 and His-90. The cysteines at positions 59 and 172 are disulfide-linked. O2 contacts are provided by His-158 and Gln-167. Cu(2+) is bound at residue Tyr-169. Residues 257-293 (CAVAKWGQCGGNGWTGCTTCAAGSTCNTQNAYYHQCV) enclose the CBM1 domain.

The protein belongs to the polysaccharide monooxygenase AA9 family. It depends on Cu(2+) as a cofactor.

The protein resides in the secreted. It carries out the reaction [(1-&gt;4)-beta-D-glucosyl]n+m + reduced acceptor + O2 = 4-dehydro-beta-D-glucosyl-[(1-&gt;4)-beta-D-glucosyl]n-1 + [(1-&gt;4)-beta-D-glucosyl]m + acceptor + H2O.. With respect to regulation, glucose dehydrogenase and aryl-alcohol quinone oxidoreductases regulate the oxidative degradation of cellulose since they can act as catalytically efficient electron donors for LPMO9E. Its function is as follows. Lytic polysaccharide monooxygenase (LPMO) that depolymerizes crystalline and amorphous polysaccharides via the oxidation of scissile alpha- or beta-(1-4)-glycosidic bonds, yielding only C1 oxidation products. Catalysis by LPMOs requires the reduction of the active-site copper from Cu(II) to Cu(I) by a reducing agent and H(2)O(2) or O(2) as a cosubstrate. Improves the progression of lytic enzymes in delignified miscanthus cell walls. This boosting effect dependents on the cellular type which indicates contrasted recalcitrance levels in plant tissues. The chain is AA9 family lytic polysaccharide monooxygenase E from Podospora anserina (strain S / ATCC MYA-4624 / DSM 980 / FGSC 10383) (Pleurage anserina).